Here is a 494-residue protein sequence, read N- to C-terminus: Casein kinase I homolog HRR25 (494 aa).

The Protein kinase domain occupies 9–278 (FRIGRKIGSG…LARLFKDLSI (270 aa)). ATP contacts are provided by residues 15 to 23 (IGSGSFGDI) and lysine 38. The active-site Proton acceptor is the aspartate 128. Serine 143 bears the Phosphoserine mark. A disordered region spans residues 394 to 494 (RQQQPQQQVQ…DKPAGQSIWL (101 aa)). 2 stretches are compositionally biased toward low complexity: residues 395–418 (QQQPQQQVQSSQPQPQPQQLQQQP) and 432–444 (QQQQRDSQEQQQQ). The segment covering 445-479 (VPMATTRATQYPPQINSNNFNTNQASVPPQMRSNP) has biased composition (polar residues).

Belongs to the protein kinase superfamily. CK1 Ser/Thr protein kinase family. Casein kinase I subfamily. As to quaternary structure, interacts with HRI1. Interacts with ELP1/IKI3; the interaction leads to ELP1/IKI3 phosphorylation.

It is found in the cytoplasm. Its subcellular location is the nucleus. The protein localises to the nucleolus. The protein resides in the nucleoplasm. The catalysed reaction is L-seryl-[protein] + ATP = O-phospho-L-seryl-[protein] + ADP + H(+). The enzyme catalyses L-threonyl-[protein] + ATP = O-phospho-L-threonyl-[protein] + ADP + H(+). In terms of biological role, protein kinase which phosphorylates serine and threonine residues. Can use casein as a substrate. Phosphorylates elongator complex member ELP1/IKI3 on 'Ser-1198' and 'Ser-1202' which promotes the tRNA modification function of the complex. Associated with repair of damaged DNA and meiosis. The protein is Casein kinase I homolog HRR25 (HRR25) of Saccharomyces cerevisiae (strain ATCC 204508 / S288c) (Baker's yeast).